The chain runs to 297 residues: Transcription factor bHLH129 (297 aa).

A disordered region spans residues 1 to 145; the sequence is MYPPNSSKST…SSSHQEHNSL (145 aa). Serine 35 is modified (phosphoserine). Low complexity predominate over residues 68–82; the sequence is SSIGFDSNASSSSSL. Gly residues predominate over residues 111 to 121; that stretch reads PNGGYGGGGEQ. A Phosphoserine modification is found at serine 138. Residues 239–289 form the bHLH domain; it reads FATHPRSIAERERRTRISGKLKKLQELVPNMDKQTSYADMLDLAVEHIKGL.

Homodimer.

The protein resides in the nucleus. This chain is Transcription factor bHLH129 (BHLH129), found in Arabidopsis thaliana (Mouse-ear cress).